We begin with the raw amino-acid sequence, 247 residues long: Acyl-coenzyme A thioesterase THEM5 (247 aa).

D167 serves as the catalytic Proton donor/acceptor.

This sequence belongs to the THEM4/THEM5 thioesterase family. As to quaternary structure, homodimer.

It is found in the mitochondrion matrix. It catalyses the reaction hexadecanoyl-CoA + H2O = hexadecanoate + CoA + H(+). It carries out the reaction (9Z,12Z)-octadecadienoyl-CoA + H2O = (9Z,12Z)-octadecadienoate + CoA + H(+). The enzyme catalyses tetradecanoyl-CoA + H2O = tetradecanoate + CoA + H(+). The catalysed reaction is (9Z)-octadecenoyl-CoA + H2O = (9Z)-octadecenoate + CoA + H(+). It catalyses the reaction (9Z)-hexadecenoyl-CoA + H2O = (9Z)-hexadecenoate + CoA + H(+). It carries out the reaction (5Z,8Z,11Z,14Z)-eicosatetraenoyl-CoA + H2O = (5Z,8Z,11Z,14Z)-eicosatetraenoate + CoA + H(+). The enzyme catalyses octadecanoyl-CoA + H2O = octadecanoate + CoA + H(+). Functionally, has acyl-CoA thioesterase activity towards long-chain (C16 and C18) fatty acyl-CoA substrates, with a preference for linoleoyl-CoA and other unsaturated long-chain fatty acid-CoA esters. Plays an important role in mitochondrial fatty acid metabolism, and in remodeling of the mitochondrial lipid cardiolipin. Required for normal mitochondrial function. This Homo sapiens (Human) protein is Acyl-coenzyme A thioesterase THEM5 (THEM5).